The sequence spans 517 residues: Endoglycoceramidase (517 aa).

An N-terminal signal peptide occupies residues 1–17 (MISVALIILFLAKVISG). Asparagine 99 carries an N-linked (GlcNAc...) asparagine glycan. Catalysis depends on glutamate 230, which acts as the Proton donor. N-linked (GlcNAc...) asparagine glycans are attached at residues asparagine 298, asparagine 380, and asparagine 393.

The protein belongs to the glycosyl hydrolase 5 (cellulase A) family. Expressed uniformly in digestive cells, tentacles and peduncle regions suggesting expression in the endoderm throughout the whole body (at protein level).

It is found in the secreted. The catalysed reaction is an oligoglycosyl-(1-&gt;4)-beta-D-glucosyl-(1&lt;-&gt;1)-ceramide + H2O = an oligoglycosyl-(1-&gt;4)-D-glucose + an N-acyl-sphingoid base. Cu(2+), zinc, manganese, calcium, magnesium and EDTA have no significant effects on enzyme activity. Enzyme requires presence of detergents such as Triton X-100 and Lubrol PX for the hydrolysis of glycosphingolipids. Taurodeoxycholate strongly inhibits the enzyme activity. In terms of biological role, hydrolysis of the glycosidic linkage between oligosaccharides and ceramides of glycosphingolipids, optimal substrates appear to be the glycosphingolipids with a gangliotetraose structure. This Hydra vulgaris (Hydra) protein is Endoglycoceramidase.